Here is a 270-residue protein sequence, read N- to C-terminus: Orotidine 5'-phosphate decarboxylase (270 aa).

The Proton donor role is filled by K89.

The protein belongs to the OMP decarboxylase family. Type 2 subfamily.

The enzyme catalyses orotidine 5'-phosphate + H(+) = UMP + CO2. It functions in the pathway pyrimidine metabolism; UMP biosynthesis via de novo pathway; UMP from orotate: step 2/2. This is Orotidine 5'-phosphate decarboxylase from Dehalococcoides mccartyi (strain CBDB1).